The chain runs to 291 residues: 4-hydroxy-tetrahydrodipicolinate synthase (291 aa).

Residue Thr44 coordinates pyruvate. Catalysis depends on Tyr132, which acts as the Proton donor/acceptor. The active-site Schiff-base intermediate with substrate is the Lys160. Pyruvate is bound at residue Ile202.

The protein belongs to the DapA family. Homotetramer; dimer of dimers.

The protein localises to the cytoplasm. It carries out the reaction L-aspartate 4-semialdehyde + pyruvate = (2S,4S)-4-hydroxy-2,3,4,5-tetrahydrodipicolinate + H2O + H(+). It functions in the pathway amino-acid biosynthesis; L-lysine biosynthesis via DAP pathway; (S)-tetrahydrodipicolinate from L-aspartate: step 3/4. Functionally, catalyzes the condensation of (S)-aspartate-beta-semialdehyde [(S)-ASA] and pyruvate to 4-hydroxy-tetrahydrodipicolinate (HTPA). The chain is 4-hydroxy-tetrahydrodipicolinate synthase from Thermodesulfovibrio yellowstonii (strain ATCC 51303 / DSM 11347 / YP87).